Consider the following 669-residue polypeptide: DNA ligase (669 aa).

NAD(+)-binding positions include 34 to 38 (DAEYD), 83 to 84 (SL), and Glu114. Lys116 acts as the N6-AMP-lysine intermediate in catalysis. NAD(+) contacts are provided by Arg137, Glu171, Lys287, and Lys311. The Zn(2+) site is built by Cys405, Cys408, Cys423, and Cys428. The 79-residue stretch at 591-669 (NVESYFAGKT…EERFLQELNK (79 aa)) folds into the BRCT domain.

This sequence belongs to the NAD-dependent DNA ligase family. LigA subfamily. It depends on Mg(2+) as a cofactor. The cofactor is Mn(2+).

It carries out the reaction NAD(+) + (deoxyribonucleotide)n-3'-hydroxyl + 5'-phospho-(deoxyribonucleotide)m = (deoxyribonucleotide)n+m + AMP + beta-nicotinamide D-nucleotide.. In terms of biological role, DNA ligase that catalyzes the formation of phosphodiester linkages between 5'-phosphoryl and 3'-hydroxyl groups in double-stranded DNA using NAD as a coenzyme and as the energy source for the reaction. It is essential for DNA replication and repair of damaged DNA. This chain is DNA ligase, found in Bacillus cereus (strain 03BB102).